Here is a 181-residue protein sequence, read N- to C-terminus: Small ribosomal subunit protein uS4 (181 aa).

The region spanning 104–166 (RRLQTIVYKK…VTSSFKSRPP (63 aa)) is the S4 RNA-binding domain.

It belongs to the universal ribosomal protein uS4 family. As to quaternary structure, part of the 30S ribosomal subunit. Contacts protein S5. The interaction surface between S4 and S5 is involved in control of translational fidelity.

Functionally, one of the primary rRNA binding proteins, it binds directly to 16S rRNA where it nucleates assembly of the body of the 30S subunit. In terms of biological role, with S5 and S12 plays an important role in translational accuracy. The polypeptide is Small ribosomal subunit protein uS4 (Saccharolobus islandicus (strain Y.N.15.51 / Yellowstone #2) (Sulfolobus islandicus)).